Consider the following 149-residue polypeptide: Transcriptional repressor NrdR (149 aa).

A zinc finger spans residues 3–34 (CPFCSAVDTKVIDSRLVGEGSSVRRRRQCLVC). One can recognise an ATP-cone domain in the interval 49–139 (PRVVKSNDVR…VYRSFEDIKE (91 aa)).

This sequence belongs to the NrdR family. Zn(2+) is required as a cofactor.

Functionally, negatively regulates transcription of bacterial ribonucleotide reductase nrd genes and operons by binding to NrdR-boxes. The chain is Transcriptional repressor NrdR from Enterobacter sp. (strain 638).